A 350-amino-acid polypeptide reads, in one-letter code: Uroporphyrinogen decarboxylase (350 aa).

Substrate contacts are provided by residues 23-27 (RQAGR), D73, Y150, T205, and H322.

The protein belongs to the uroporphyrinogen decarboxylase family. Homodimer.

Its subcellular location is the cytoplasm. It carries out the reaction uroporphyrinogen III + 4 H(+) = coproporphyrinogen III + 4 CO2. It functions in the pathway porphyrin-containing compound metabolism; protoporphyrin-IX biosynthesis; coproporphyrinogen-III from 5-aminolevulinate: step 4/4. Its function is as follows. Catalyzes the decarboxylation of four acetate groups of uroporphyrinogen-III to yield coproporphyrinogen-III. This chain is Uroporphyrinogen decarboxylase, found in Methylococcus capsulatus (strain ATCC 33009 / NCIMB 11132 / Bath).